The following is an 899-amino-acid chain: Protein translocase subunit SecA (899 aa).

ATP is bound by residues Q87, 105 to 109 (GEGKT), and D516. The Zn(2+) site is built by C884, C886, C895, and H896.

This sequence belongs to the SecA family. As to quaternary structure, monomer and homodimer. Part of the essential Sec protein translocation apparatus which comprises SecA, SecYEG and auxiliary proteins SecDF. Other proteins may also be involved. The cofactor is Zn(2+).

It is found in the cell inner membrane. Its subcellular location is the cytoplasm. The enzyme catalyses ATP + H2O + cellular proteinSide 1 = ADP + phosphate + cellular proteinSide 2.. In terms of biological role, part of the Sec protein translocase complex. Interacts with the SecYEG preprotein conducting channel. Has a central role in coupling the hydrolysis of ATP to the transfer of proteins into and across the cell membrane, serving as an ATP-driven molecular motor driving the stepwise translocation of polypeptide chains across the membrane. This chain is Protein translocase subunit SecA, found in Borreliella burgdorferi (strain ATCC 35210 / DSM 4680 / CIP 102532 / B31) (Borrelia burgdorferi).